A 310-amino-acid polypeptide reads, in one-letter code: Ribosomal protein L11 methyltransferase (310 aa).

The S-adenosyl-L-methionine site is built by threonine 156, glycine 179, aspartate 201, and asparagine 246.

The protein belongs to the methyltransferase superfamily. PrmA family.

It is found in the cytoplasm. The enzyme catalyses L-lysyl-[protein] + 3 S-adenosyl-L-methionine = N(6),N(6),N(6)-trimethyl-L-lysyl-[protein] + 3 S-adenosyl-L-homocysteine + 3 H(+). In terms of biological role, methylates ribosomal protein L11. The sequence is that of Ribosomal protein L11 methyltransferase from Desulfatibacillum aliphaticivorans.